Reading from the N-terminus, the 551-residue chain is Putative transport protein CGSHiEE_03135 (551 aa).

The next 5 membrane-spanning stretches (helical) occupy residues 4–24 (IAITISLLALVAVIGLWIGHW), 28–48 (GVGLGIGGVLFGGIIVAHFTD), 65–85 (FGLILFVYTIGIQVGPGFFSS), 95–115 (AFAILIIVLGSIAVVLVHKIA), and 157–177 (VSYAMAYPFGICGILLAMWLI). RCK C-terminal domains lie at 191 to 275 (RFNA…IIGY) and 277 to 360 (VDAP…VIGN). The next 6 membrane-spanning stretches (helical) occupy residues 370 to 390 (MLPVFIGIGLGVLVGSIPFYI), 402 to 424 (AGGPLVVVLILARIGTIGKLYWF), 438 to 458 (IVLFLAVVGLKSGGSFFDTLV), 463 to 483 (LEWMGYGIFITFVPLIIAGTI), 492 to 512 (YLTICGLLAGSMTDPPALAFA), and 529 to 549 (VYPLVMFLRIMSPQLLAVLLW).

The protein belongs to the AAE transporter (TC 2.A.81) family. YidE subfamily.

It localises to the cell membrane. This chain is Putative transport protein CGSHiEE_03135, found in Haemophilus influenzae (strain PittEE).